The sequence spans 152 residues: Sec-independent protein translocase protein TatB (152 aa).

Residues 1–21 traverse the membrane as a helical segment; it reads MFDLGWSELLVIGVVALIVVG.

The protein belongs to the TatB family. The Tat system comprises two distinct complexes: a TatABC complex, containing multiple copies of TatA, TatB and TatC subunits, and a separate TatA complex, containing only TatA subunits. Substrates initially bind to the TatABC complex, which probably triggers association of the separate TatA complex to form the active translocon.

The protein resides in the cell inner membrane. Functionally, part of the twin-arginine translocation (Tat) system that transports large folded proteins containing a characteristic twin-arginine motif in their signal peptide across membranes. Together with TatC, TatB is part of a receptor directly interacting with Tat signal peptides. TatB may form an oligomeric binding site that transiently accommodates folded Tat precursor proteins before their translocation. This is Sec-independent protein translocase protein TatB from Ruegeria pomeroyi (strain ATCC 700808 / DSM 15171 / DSS-3) (Silicibacter pomeroyi).